The chain runs to 956 residues: Ubiquitin carboxyl-terminal hydrolase CYLD (956 aa).

An interaction with TRIP region spans residues 106 to 593; that stretch reads CEERFSLFKN…LEIMIGKKKG (488 aa). 2 CAP-Gly domains span residues 153–198 and 253–286; these read LAER…VFVA and DVLP…VQLC. The interval 309–353 is disordered; the sequence is SVTQERRPPKLAFMSRGVGDKGSSSHNKPKATGSTSDPGNRNRSE. A compositionally biased stretch (polar residues) spans 330-349; it reads GSSSHNKPKATGSTSDPGNR. Residue S387 is modified to Phosphoserine. The tract at residues 392 to 411 is disordered; sequence STDFDRSSPPLQPPPVNSLT. The tract at residues 394-469 is interaction with TRAF2; that stretch reads DFDRSSPPLQ…LAMPPGNSHG (76 aa). 2 positions are modified to phosphoserine: S418 and S422. Residues 470 to 554 are interaction with IKBKG/NEMO; that stretch reads LEVGSLAEVK…FASLQPVSNQ (85 aa). Residues 492-535 enclose the CAP-Gly 3 domain; that stretch reads GQPPGLNEVLAGLELEDECAGCTDGTFRGTRYFTCALKKALFVK. The USP domain occupies 592 to 950; that stretch reads KGIQGHYNSC…DAYMCMYQSP (359 aa). Residue C601 is the Nucleophile of the active site. Positions 781 to 833 are B-box; the sequence is LEDTPRQCRICGGLAMYECRECYDDPDISAGKIKQFCKTCNTQVHLHPKRLNH. 8 residues coordinate Zn(2+): C788, C791, C799, C802, C817, C820, H825, and H833. H871 functions as the Proton acceptor in the catalytic mechanism.

The protein belongs to the peptidase C19 family. In terms of assembly, interacts (via CAP-Gly domain) with IKBKG/NEMO (via proline-rich C-terminal region). Interacts with TRAF2 and TRIP. Interacts with PLK1, DVL1, DVL3, MAVS, TBK1, IKKE and RIGI. Interacts (via CAP-Gly domain) with microtubules. Interacts with HDAC6 and BCL3. Interacts with MAP3K7. Identified in a complex with TRAF6 and SQSTM1. Interacts with OPTN and SQSTM1. Interacts with CEP350. Interacts with RNF31; the interaction is indirect and is mediated via SPATA2. Interacts with SPATA2 (via the PUB domain); the interaction is direct and recruits CYLD to the LUBAC complex, thereby regulating TNF-alpha-induced necroptosis. Post-translationally, ubiquitinated. Polyubiquitinated in hepatocytes treated with palmitic acid. Ubiquitination is mediated by E3 ligase TRIM47 and leads to proteasomal degradation. Phosphorylated on several serine residues by IKKA and/or IKKB in response to immune stimuli. Phosphorylation requires IKBKG. Phosphorylation abolishes TRAF2 deubiquitination, interferes with the activation of Jun kinases, and strongly reduces CD40-dependent gene activation by NF-kappa-B. Detected in fetal brain, testis, and skeletal muscle, and at a lower level in adult brain, leukocytes, liver, heart, kidney, spleen, ovary and lung. Isoform 2 is found in all tissues except kidney.

The protein resides in the cytoplasm. Its subcellular location is the perinuclear region. The protein localises to the cytoskeleton. It localises to the cell membrane. It is found in the microtubule organizing center. The protein resides in the centrosome. Its subcellular location is the spindle. The protein localises to the cilium basal body. It carries out the reaction Thiol-dependent hydrolysis of ester, thioester, amide, peptide and isopeptide bonds formed by the C-terminal Gly of ubiquitin (a 76-residue protein attached to proteins as an intracellular targeting signal).. Its activity is regulated as follows. Inhibited by phosphorylation at serine residues. Its function is as follows. Deubiquitinase that specifically cleaves 'Lys-63'- and linear 'Met-1'-linked polyubiquitin chains and is involved in NF-kappa-B activation and TNF-alpha-induced necroptosis. Negatively regulates NF-kappa-B activation by deubiquitinating upstream signaling factors. Contributes to the regulation of cell survival, proliferation and differentiation via its effects on NF-kappa-B activation. Negative regulator of Wnt signaling. Inhibits HDAC6 and thereby promotes acetylation of alpha-tubulin and stabilization of microtubules. Plays a role in the regulation of microtubule dynamics, and thereby contributes to the regulation of cell proliferation, cell polarization, cell migration, and angiogenesis. Required for normal cell cycle progress and normal cytokinesis. Inhibits nuclear translocation of NF-kappa-B. Plays a role in the regulation of inflammation and the innate immune response, via its effects on NF-kappa-B activation. Dispensable for the maturation of intrathymic natural killer cells, but required for the continued survival of immature natural killer cells. Negatively regulates TNFRSF11A signaling and osteoclastogenesis. Involved in the regulation of ciliogenesis, allowing ciliary basal bodies to migrate and dock to the plasma membrane; this process does not depend on NF-kappa-B activation. Ability to remove linear ('Met-1'-linked) polyubiquitin chains regulates innate immunity and TNF-alpha-induced necroptosis: recruited to the LUBAC complex via interaction with SPATA2 and restricts linear polyubiquitin formation on target proteins. Regulates innate immunity by restricting linear polyubiquitin formation on RIPK2 in response to NOD2 stimulation. Involved in TNF-alpha-induced necroptosis by removing linear ('Met-1'-linked) polyubiquitin chains from RIPK1, thereby regulating the kinase activity of RIPK1. Negatively regulates intestinal inflammation by removing 'Lys-63' linked polyubiquitin chain of NLRP6, thereby reducing the interaction between NLRP6 and PYCARD/ASC and formation of the NLRP6 inflammasome. Does not catalyze deubiquitination of heterotypic 'Lys-63'-/'Lys-48'-linked branched ubiquitin chains. Removes 'Lys-63' linked polyubiquitin chain of MAP3K7, which inhibits phosphorylation and blocks downstream activation of the JNK-p38 kinase cascades. Also removes 'Lys-63'-linked polyubiquitin chains of MAP3K1 and MA3P3K3, which inhibit their interaction with MAP2K1 and MAP2K2. The protein is Ubiquitin carboxyl-terminal hydrolase CYLD of Homo sapiens (Human).